The primary structure comprises 29 residues: YCQKFLWTCDTERKCCEDMVCELWCKLEK.

3 disulfide bridges follow: Cys2/Cys16, Cys9/Cys21, and Cys15/Cys25.

This sequence belongs to the neurotoxin 30 (phrixotoxin) family. As to expression, expressed by the venom gland.

Its subcellular location is the secreted. Its function is as follows. Insect-selective neurotoxin that potently blocks insect calcium-activated potassium (BKCa) channels (Slo-type) in cockroach dorsal unpaired median (DUM) neurons (IC(50)=3.7 nM). This occurs in the absence of any shifts in the voltage dependence of activation. At high concentrations (330 nM), it partially inhibits cockroach delayed-rectifier potassium channels (Kv) currents. May interact with the turret and/or loop region of the external entrance to the channel and does not project deeply into the pore of the channel. In vivo, does not show toxicity in mice after intracerebroventricular injection of up to 25 pmol/g (1.8 ug/20 g mouse). The chain is Lambda-theraphotoxin-Ec2a from Eucratoscelus constrictus (African red-rump baboon spider).